The following is a 386-amino-acid chain: Phosphoglycerate kinase (386 aa).

Substrate-binding positions include 21–23 (DLN), Arg-36, 59–62 (HLGR), Arg-113, and Arg-146. ATP-binding positions include Lys-197, Glu-313, and 339 to 342 (GGDT).

Belongs to the phosphoglycerate kinase family. Monomer.

The protein localises to the cytoplasm. It carries out the reaction (2R)-3-phosphoglycerate + ATP = (2R)-3-phospho-glyceroyl phosphate + ADP. It functions in the pathway carbohydrate degradation; glycolysis; pyruvate from D-glyceraldehyde 3-phosphate: step 2/5. The chain is Phosphoglycerate kinase from Serratia proteamaculans (strain 568).